Reading from the N-terminus, the 136-residue chain is Large-conductance mechanosensitive channel (136 aa).

The next 2 membrane-spanning stretches (helical) occupy residues 9 to 29 and 79 to 99; these read AFAS…GAAF and IQTI…VKAI.

The protein belongs to the MscL family. In terms of assembly, homopentamer.

Its subcellular location is the cell inner membrane. Channel that opens in response to stretch forces in the membrane lipid bilayer. May participate in the regulation of osmotic pressure changes within the cell. The sequence is that of Large-conductance mechanosensitive channel from Shewanella baltica (strain OS223).